Reading from the N-terminus, the 362-residue chain is Atypical chemokine receptor 3 (362 aa).

The Extracellular portion of the chain corresponds to 1-47; sequence MDVHLFDYAEPGNYSDINWPCNSSDCIVVDTVQCPTMPNKNVLLYTL. Residues N13 and N22 are each glycosylated (N-linked (GlcNAc...) asparagine). Residues 48-68 traverse the membrane as a helical segment; sequence SFIYIFIFVIGMIANSVVVWV. Residues 69-81 are Cytoplasmic-facing; it reads NIQAKTTGYDTHC. The chain crosses the membrane as a helical span at residues 82–102; sequence YILNLAIADLWVVITIPVWVV. The Extracellular portion of the chain corresponds to 103-118; sequence SLVQHNQWPMGELTCK. An intrachain disulfide couples C117 to C196. Residues 119-139 traverse the membrane as a helical segment; that stretch reads ITHLIFSINLFGSIFFLACMS. Topologically, residues 140 to 162 are cytoplasmic; that stretch reads VDRYLSITYFTGTSSYKKKMVRR. A helical transmembrane segment spans residues 163-183; it reads VVCILVWLLAFFVSLPDTYYL. Residues 184–213 lie on the Extracellular side of the membrane; sequence KTVTSASNNETYCRSFYPEHSIKEWLIGME. The helical transmembrane segment at 214–234 threads the bilayer; the sequence is LVSVILGFAVPFTIIAIFYFL. Residues 235-252 are Cytoplasmic-facing; sequence LARAMSASGDQEKHSSRK. The chain crosses the membrane as a helical span at residues 253 to 273; sequence IIFSYVVVFLVCWLPYHFVVL. Over 274-296 the chain is Extracellular; it reads LDIFSILHYIPFTCQLENVLFTA. Residues 297–319 form a helical membrane-spanning segment; it reads LHVTQCLSLVHCCVNPVLYSFIN. At 320-362 the chain is on the cytoplasmic side; sequence RNYRYELMKAFIFKYSAKTGLTKLIDASRVSETEYSALEQNTK. The C-terminal cytoplasmic tail stretch occupies residues 324–362; it reads YELMKAFIFKYSAKTGLTKLIDASRVSETEYSALEQNTK. Phosphoserine is present on residues S347, S350, and S355.

It belongs to the G-protein coupled receptor 1 family. Atypical chemokine receptor subfamily. Homodimer. Can form heterodimers with CXCR4; heterodimerization may regulate CXCR4 signaling activity. Interacts with ARRB1 and ARRB2. In terms of processing, the Ser/Thr residues in the C-terminal cytoplasmic tail may be phosphorylated. Ubiquitinated at the Lys residues in its C-terminal cytoplasmic tail and is essential for correct trafficking from and to the cell membrane. Deubiquitinated by CXCL12-stimulation in a reversible manner. As to expression, not detected in blood, liver, lung and heart, but high expression detected in several tumor cell lines (at protein level). Expressed in heart, spleen, kidney, lung, ovary, brain, testis, astrocytes, neutrophils and B-lymphocytes.

It localises to the cell membrane. The protein localises to the early endosome. It is found in the recycling endosome. In terms of biological role, atypical chemokine receptor that controls chemokine levels and localization via high-affinity chemokine binding that is uncoupled from classic ligand-driven signal transduction cascades, resulting instead in chemokine sequestration, degradation, or transcytosis. Also known as interceptor (internalizing receptor) or chemokine-scavenging receptor or chemokine decoy receptor. Acts as a receptor for chemokines CXCL11 and CXCL12/SDF1. Chemokine binding does not activate G-protein-mediated signal transduction but instead induces beta-arrestin recruitment, leading to ligand internalization and activation of MAPK signaling pathway. Required for regulation of CXCR4 protein levels in migrating interneurons, thereby adapting their chemokine responsiveness. In glioma cells, transduces signals via MEK/ERK pathway, mediating resistance to apoptosis. Promotes cell growth and survival. Not involved in cell migration, adhesion or proliferation of normal hematopoietic progenitors but activated by CXCL11 in malignant hemapoietic cells, leading to phosphorylation of ERK1/2 (MAPK3/MAPK1) and enhanced cell adhesion and migration. Plays a regulatory role in CXCR4-mediated activation of cell surface integrins by CXCL12. Required for heart valve development. Regulates axon guidance in the oculomotor system through the regulation of CXCL12 levels. In Mus musculus (Mouse), this protein is Atypical chemokine receptor 3.